Here is a 143-residue protein sequence, read N- to C-terminus: Large ribosomal subunit protein uL13 (143 aa).

It belongs to the universal ribosomal protein uL13 family. Part of the 50S ribosomal subunit.

Functionally, this protein is one of the early assembly proteins of the 50S ribosomal subunit, although it is not seen to bind rRNA by itself. It is important during the early stages of 50S assembly. This chain is Large ribosomal subunit protein uL13, found in Coprothermobacter proteolyticus (strain ATCC 35245 / DSM 5265 / OCM 4 / BT).